The following is a 211-amino-acid chain: SOSS complex subunit B2 (211 aa).

A DNA-binding region (OB) is located at residues 27–97 (IVLEIGRVTK…TLYTGRGGDL (71 aa)). A disordered region spans residues 125 to 211 (NQQNKTSKEQ…GRDPRRASKR (87 aa)). The segment covering 136–157 (GNSPPNQNAGNGTVPVFSNNNA) has biased composition (polar residues). A compositionally biased stretch (pro residues) spans 179 to 195 (NGPPPVTAGGTPAPPKP).

The protein belongs to the SOSS-B family. SOSS-B2 subfamily. As to quaternary structure, component of the SOSS complex, composed of soss-b (soss-b1/nabp2 or soss-b2/nabp1), soss-a/ints3 and soss-c/inip. SOSS complexes containing soss-b1/nabp2 are more abundant than complexes containing soss-b2/nabp1.

It is found in the nucleus. Its function is as follows. Component of the SOSS complex, a multiprotein complex that functions downstream of the MRN complex to promote DNA repair and G2/M checkpoint. In the SOSS complex, acts as a sensor of single-stranded DNA that binds to single-stranded DNA. The SOSS complex associates with DNA lesions and influences diverse endpoints in the cellular DNA damage response including cell-cycle checkpoint activation, recombinational repair and maintenance of genomic stability. Required for efficient homologous recombination-dependent repair of double-strand breaks (DSBs). In Danio rerio (Zebrafish), this protein is SOSS complex subunit B2 (nabp1).